The sequence spans 960 residues: Probable glutamyl endopeptidase, chloroplastic (960 aa).

Residues 1 to 62 (MMRFHKACHR…FSENPLTTVM (62 aa)) constitute a chloroplast transit peptide. The interval 78–98 (SGGAEDGGGTSNGSLSASATA) is disordered. Residues 89–98 (NGSLSASATA) show a composition bias toward polar residues. Residues Ser-780, Asp-854, and His-888 each act as charge relay system in the active site. Residues 915–960 (TSDADTSPDQSKEGSDSADKVSTGTGGGNPEFGEHEVHSKLRRSLL) form a disordered region. Residues 924-933 (QSKEGSDSAD) show a composition bias toward basic and acidic residues.

The protein belongs to the peptidase S9D family.

It localises to the plastid. It is found in the chloroplast stroma. In terms of biological role, serine-type protease active in vitro against the LHCII N-terminal. Cleaves its substrate on the carboxy-side of Glu residues. In Arabidopsis thaliana (Mouse-ear cress), this protein is Probable glutamyl endopeptidase, chloroplastic (GEP).